A 596-amino-acid polypeptide reads, in one-letter code: MLPTRRPLAEVTRELVAVATGKLPADTVIKGGKVVNVFTGEILPWDIAIKNGRIASVGDVSAAVGPETEVIDASGYYLCPGFMDGHVHVESSMVTVTQFARAVLPGGTTAIFMDPHEIANVLGMDGVKLMVDEGRELPLKVFATMPSCVPAAPGFEDAGASFGPEEVAAAMQWPGICGLGEMMNFPGVLAGDPAVHGELRATLAAGKPITGHFAMPADFQGLAGYTAAGISSCHESTRTEDALNRLRLGMYAMMREGSAWHDIKATIKSLTETRVDSRRAMLVSDDTHPETLLSTGHLNHVVRRAIEEGLNPIRAIQAVTINTAECFGVAQDLGAIAPGRYADILFLKDLARVAIDKVMVDGRVVAAGGRLLVDLPAVAYPDRVRHSVHLKEPLTPWHFRINAPAGKSRVQVRVMEIIEANVNTRHLTVTVPVVDGQVTAGVEADLAKVAVVERHGGNGSIGLGFVRGFGFKAGAVASTVAHDSHNLLIVGMNDADMALAGNTLAGCGGGMVAVRDGQVLALLPLPIAGLMSDRPVEEVAARLAAVHRAWQELGCRLVSPFMTMALLSLPVLPELRLTNRGLVDTLQFKMVDLITG.

Belongs to the metallo-dependent hydrolases superfamily. Adenine deaminase family. Mn(2+) serves as cofactor.

The enzyme catalyses adenine + H2O + H(+) = hypoxanthine + NH4(+). In Moorella thermoacetica (strain ATCC 39073 / JCM 9320), this protein is Adenine deaminase.